The primary structure comprises 355 residues: Putative [LysW]-L-2-aminoadipate/[LysW]-L-glutamate phosphate reductase (355 aa).

13–16 (SGMT) is a binding site for NADP(+). Cys153 is an active-site residue. Asn323 is a binding site for NADP(+).

This sequence belongs to the NAGSA dehydrogenase family. Type 1 subfamily. LysY sub-subfamily.

It is found in the cytoplasm. It carries out the reaction [amino-group carrier protein]-C-terminal-N-(1-carboxy-5-oxopentan-1-yl)-L-glutamine + phosphate + NADP(+) = [amino-group carrier protein]-C-terminal-N-(1-carboxy-5-phosphooxy-5-oxopentan-1-yl)-L-glutamine + NADPH + H(+). It catalyses the reaction [amino-group carrier protein]-C-terminal-gamma-(L-glutamyl-5-semialdehyde)-L-glutamate + phosphate + NADP(+) = [amino-group carrier protein]-C-terminal-gamma-(5-phospho-L-glutamyl)-L-glutamate + NADPH + H(+). It functions in the pathway amino-acid biosynthesis; L-lysine biosynthesis via AAA pathway; L-lysine from L-alpha-aminoadipate (Thermus route): step 3/5. Its pathway is amino-acid biosynthesis; L-arginine biosynthesis. Functionally, involved in both the arginine and lysine biosynthetic pathways. The polypeptide is Putative [LysW]-L-2-aminoadipate/[LysW]-L-glutamate phosphate reductase (Aeropyrum pernix (strain ATCC 700893 / DSM 11879 / JCM 9820 / NBRC 100138 / K1)).